A 397-amino-acid chain; its full sequence is Phosphoglycerate kinase (397 aa).

Substrate contacts are provided by residues 21-23 (DVN), arginine 36, 59-62 (HFGR), arginine 119, and arginine 152. Residues lysine 202, glutamate 324, and 354–357 (GGDT) contribute to the ATP site.

Belongs to the phosphoglycerate kinase family. In terms of assembly, monomer.

The protein localises to the cytoplasm. It carries out the reaction (2R)-3-phosphoglycerate + ATP = (2R)-3-phospho-glyceroyl phosphate + ADP. It participates in carbohydrate degradation; glycolysis; pyruvate from D-glyceraldehyde 3-phosphate: step 2/5. The chain is Phosphoglycerate kinase from Cereibacter sphaeroides (strain KD131 / KCTC 12085) (Rhodobacter sphaeroides).